A 318-amino-acid chain; its full sequence is Taste receptor type 2 member 117 (318 aa).

Over 1–16 (MQHNLKTIFVISHSTL) the chain is Extracellular. Residues 17 to 37 (TIILFTELVTGIIGNGFMALV) traverse the membrane as a helical segment. The Cytoplasmic portion of the chain corresponds to 38–53 (HCMDWLRRKKISLVNQ). Residues 54–74 (ILTALAISRIFQLCLLFISLV) traverse the membrane as a helical segment. Residues 75 to 93 (ISFSYPDLTTTSLIKVTCN) lie on the Extracellular side of the membrane. A helical membrane pass occupies residues 94-114 (LWIIVNHFNIWLATCLGIFYF). At 115–134 (LKISNFSNSLFLYLKWRVEK) the chain is on the cytoplasmic side. Residues 135-155 (VVLVTLLVSLVLLTLNSLLIN) traverse the membrane as a helical segment. Residues 156 to 189 (LEINICINEYQRNITYSFNSYYHANCHRQMLSLH) lie on the Extracellular side of the membrane. Asparagine 168 carries an N-linked (GlcNAc...) asparagine glycan. The chain crosses the membrane as a helical span at residues 190–210 (IIFLSVPFVLSLSTFLLLIFS). The Cytoplasmic segment spans residues 211-238 (LGTHHKKMQQHVQGRRDASTMAHFKALQ). A helical transmembrane segment spans residues 239 to 259 (TVIAFLLLYSIFILSVLVQIW). The Extracellular segment spans residues 260–268 (KYELLKKNL). The helical transmembrane segment at 269 to 289 (FILFCQVAYVAFPSFHSYILI) threads the bilayer. Residues 290 to 318 (LGDMKMRQACLSVLWWQKFRKNYVEPLDL) are Cytoplasmic-facing.

This sequence belongs to the G-protein coupled receptor T2R family.

The protein resides in the membrane. Functionally, putative taste receptor which may play a role in the perception of bitterness. This chain is Taste receptor type 2 member 117, found in Rattus norvegicus (Rat).